Reading from the N-terminus, the 527-residue chain is Peptide chain release factor 3 (527 aa).

Positions asparagine 9–glutamine 278 constitute a tr-type G domain. Residues serine 18–threonine 25, aspartate 86–histidine 90, and asparagine 140–aspartate 143 contribute to the GTP site.

It belongs to the TRAFAC class translation factor GTPase superfamily. Classic translation factor GTPase family. PrfC subfamily.

Its subcellular location is the cytoplasm. Increases the formation of ribosomal termination complexes and stimulates activities of RF-1 and RF-2. It binds guanine nucleotides and has strong preference for UGA stop codons. It may interact directly with the ribosome. The stimulation of RF-1 and RF-2 is significantly reduced by GTP and GDP, but not by GMP. The sequence is that of Peptide chain release factor 3 from Haemophilus influenzae (strain 86-028NP).